A 516-amino-acid polypeptide reads, in one-letter code: Lipid II flippase MurJ (516 aa).

The next 11 helical transmembrane spans lie at 93-113 (WALAVLSVVGIAGASWVVFAV), 133-153 (IMFPYIVFISLTTLASGVLNT), 159-179 (LPAFAPVLLNVAFIAAAVFVA), 188-208 (ALAWAVIVGGVLQFLVQLPGL), 233-253 (VLAKMVPATFAVSVAQLSLII), 275-295 (LMEFPTALLGVALGTILLPSL), 317-337 (VTFLLAAPSALALFFFATPLT), 358-378 (LATYGIGLVGIILIKILAPGF), 390-409 (IAIGVLIVTQLSNYVFVPLI), 448-468 (FFVQLVGAALVLAGLMHWCAI), and 483-503 (IALMAACLVLFAALYFGMLWV).

Belongs to the MurJ/MviN family.

The protein localises to the cell inner membrane. The protein operates within cell wall biogenesis; peptidoglycan biosynthesis. In terms of biological role, involved in peptidoglycan biosynthesis. Transports lipid-linked peptidoglycan precursors from the inner to the outer leaflet of the cytoplasmic membrane. The chain is Lipid II flippase MurJ from Burkholderia cenocepacia (strain ATCC BAA-245 / DSM 16553 / LMG 16656 / NCTC 13227 / J2315 / CF5610) (Burkholderia cepacia (strain J2315)).